The following is a 468-amino-acid chain: Methionine aminopeptidase 2 (468 aa).

The span at 63 to 74 (AAKEATKKDAKG) shows a compositional bias: basic and acidic residues. A disordered region spans residues 63 to 87 (AAKEATKKDAKGGKGKANGSAAATA). Substrate is bound at residue His-219. 3 residues coordinate a divalent metal cation: Asp-239, Asp-250, and His-319. Residue His-327 participates in substrate binding. The a divalent metal cation site is built by Glu-352 and Glu-449.

Belongs to the peptidase M24A family. Methionine aminopeptidase eukaryotic type 2 subfamily. It depends on Co(2+) as a cofactor. Requires Zn(2+) as cofactor. Mn(2+) serves as cofactor. The cofactor is Fe(2+).

It localises to the cytoplasm. The enzyme catalyses Release of N-terminal amino acids, preferentially methionine, from peptides and arylamides.. With respect to regulation, inhibited by the fumagillin analog, TNP-470. In terms of biological role, cotranslationally removes the N-terminal methionine from nascent proteins. The N-terminal methionine is often cleaved when the second residue in the primary sequence is small and uncharged (Met-Ala-, Cys, Gly, Pro, Ser, Thr, or Val). Required for germ cell proliferation and/or differentiation. The chain is Methionine aminopeptidase 2 from Caenorhabditis elegans.